The sequence spans 204 residues: Proteasome subunit beta (204 aa).

The propeptide at 1–8 (MDDKILEG) is removed in mature form; by autocatalysis. Thr9 acts as the Nucleophile in catalysis.

Belongs to the peptidase T1B family. As to quaternary structure, the 20S proteasome core is composed of 14 alpha and 14 beta subunits that assemble into four stacked heptameric rings, resulting in a barrel-shaped structure. The two inner rings, each composed of seven catalytic beta subunits, are sandwiched by two outer rings, each composed of seven alpha subunits. The catalytic chamber with the active sites is on the inside of the barrel. Has a gated structure, the ends of the cylinder being occluded by the N-termini of the alpha-subunits. Is capped at one or both ends by the proteasome regulatory ATPase, PAN.

It is found in the cytoplasm. The enzyme catalyses Cleavage of peptide bonds with very broad specificity.. Its activity is regulated as follows. The formation of the proteasomal ATPase PAN-20S proteasome complex, via the docking of the C-termini of PAN into the intersubunit pockets in the alpha-rings, triggers opening of the gate for substrate entry. Interconversion between the open-gate and close-gate conformations leads to a dynamic regulation of the 20S proteasome proteolysis activity. In terms of biological role, component of the proteasome core, a large protease complex with broad specificity involved in protein degradation. The protein is Proteasome subunit beta of Methanobrevibacter smithii (strain ATCC 35061 / DSM 861 / OCM 144 / PS).